The chain runs to 503 residues: Probable cytosol aminopeptidase (503 aa).

Mn(2+) contacts are provided by lysine 270 and aspartate 275. Residue lysine 282 is part of the active site. Aspartate 293, aspartate 352, and glutamate 354 together coordinate Mn(2+). The active site involves arginine 356.

It belongs to the peptidase M17 family. The cofactor is Mn(2+).

It is found in the cytoplasm. The catalysed reaction is Release of an N-terminal amino acid, Xaa-|-Yaa-, in which Xaa is preferably Leu, but may be other amino acids including Pro although not Arg or Lys, and Yaa may be Pro. Amino acid amides and methyl esters are also readily hydrolyzed, but rates on arylamides are exceedingly low.. The enzyme catalyses Release of an N-terminal amino acid, preferentially leucine, but not glutamic or aspartic acids.. Its function is as follows. Presumably involved in the processing and regular turnover of intracellular proteins. Catalyzes the removal of unsubstituted N-terminal amino acids from various peptides. This is Probable cytosol aminopeptidase from Enterobacter sp. (strain 638).